A 20-amino-acid chain; its full sequence is Collagenolytic protease 35 kDa 2 (20 aa).

The 20-residue stretch at 1–20 (IVGGTEVTPGEIPYQLSFQD) folds into the Peptidase S1 domain. A disordered region spans residues 1 to 20 (IVGGTEVTPGEIPYQLSFQD).

Belongs to the peptidase S1 family.

It catalyses the reaction Hydrolysis of proteins, with broad specificity for peptide bonds. Native collagen is cleaved about 75% of the length of the molecule from the N-terminus. Low activity on small molecule substrates of both trypsin and chymotrypsin.. This enzyme is a serine protease capable of degrading the native triple helix of collagen. The protein is Collagenolytic protease 35 kDa 2 of Chionoecetes opilio (Atlantic snow crab).